Consider the following 883-residue polypeptide: Valine--tRNA ligase (883 aa).

A 'HIGH' region motif is present at residues 46–56 (PNVTGKLHLGH). A 'KMSKS' region motif is present at residues 520–524 (KMSKS). Lys-523 contacts ATP. The stretch at 809–844 (LADLLNVEEELARLEKELAKWQKELDMVGKKLSNER) forms a coiled coil.

This sequence belongs to the class-I aminoacyl-tRNA synthetase family. ValS type 1 subfamily. As to quaternary structure, monomer.

It localises to the cytoplasm. It catalyses the reaction tRNA(Val) + L-valine + ATP = L-valyl-tRNA(Val) + AMP + diphosphate. Its function is as follows. Catalyzes the attachment of valine to tRNA(Val). As ValRS can inadvertently accommodate and process structurally similar amino acids such as threonine, to avoid such errors, it has a 'posttransfer' editing activity that hydrolyzes mischarged Thr-tRNA(Val) in a tRNA-dependent manner. The chain is Valine--tRNA ligase from Streptococcus thermophilus (strain CNRZ 1066).